A 314-amino-acid chain; its full sequence is MKPAGGRGGWGWGGGKGGSKGGDTGSGTKGGFGARTRGSSGGGRGRGRGGGGGGGGGGGDRQRRGGPGKNKNRRKKGITVSVEPHRHEGVFIYRGAEDALVTLNMVPGVSVYGEKRVTVMENGEKQEYRTWNPFRSKLAAAILGGVDQIHIKPKSKVLYLGAASGTTVSHVSDIIGPDGLVYAVEFSHRAGRDLVNVAKKRTNIIPVLEDARHPLKYRMLIGMVDVIFADVAQPDQSRIVALNAHTFLRNGGHFLISIKANCIDSTASAEAVFASEVRKLQQENLKPQEQLTLEPYERDHAVVVGVYRPPPKSK.

The span at 1-59 (MKPAGGRGGWGWGGGKGGSKGGDTGSGTKGGFGARTRGSSGGGRGRGRGGGGGGGGGGG) shows a compositional bias: gly residues. The segment at 1–82 (MKPAGGRGGW…RRKKGITVSV (82 aa)) is disordered. Position 7 is an omega-N-methylarginine (Arg-7). Basic residues predominate over residues 64 to 77 (RGGPGKNKNRRKKG). S-adenosyl-L-methionine contacts are provided by residues 166–167 (TT), 185–186 (EF), 210–211 (DA), and 230–233 (DVAQ).

It belongs to the methyltransferase superfamily. Fibrillarin family. Component of a box C/D small nucleolar ribonucleoprotein (snoRNP) complex composed of FBLL1, SNU13/NHP2L1, NOP56 and NOP58 and a guide snoRNA which mediates 2'-hydroxyl ribose methylation in RNAs.

The protein resides in the nucleus. It is found in the nucleolus. The catalysed reaction is a ribonucleotide in RNA + S-adenosyl-L-methionine = a 2'-O-methylribonucleotide in RNA + S-adenosyl-L-homocysteine + H(+). S-adenosyl-L-methionine-dependent RNA methyltransferase that catalyzes 2'-hydroxyl ribose methylation in RNAs. Functions as part of box C/D small nucleolar ribonucleoprotein (snoRNP) complexes, where guide snoRNAs ensure methylation specificity through base pairing with RNA substrates. Exhibits broad substrate specificity, methylating multiple sites on ribosomal RNAs (rRNAs) and messenger RNAs (mRNAs) depending on the guide snoRNA incorporated in the complex. Specifically expressed in brain, it regulates the expression of GAP43 by stabilizing its mRNA through methylation and thereby plays an indirect role in neuronal differentiation. The polypeptide is RNA 2'-O-methyltransferase FBLL1 (Mus musculus (Mouse)).